The primary structure comprises 96 residues: UPF0235 protein Pfl01_5322 (96 aa).

The protein belongs to the UPF0235 family.

This chain is UPF0235 protein Pfl01_5322, found in Pseudomonas fluorescens (strain Pf0-1).